We begin with the raw amino-acid sequence, 71 residues long: Conotoxin PnMEKL-032 (71 aa).

Positions 1-19 (MQKLIILLLVAAVLMSTQA) are cleaved as a signal peptide. The propeptide occupies 20 to 46 (LFQEKRLKEKINFLSKEKADAEKQQKR). Disulfide bonds link cysteine 48–cysteine 62, cysteine 55–cysteine 66, and cysteine 61–cysteine 70.

It belongs to the conotoxin O2 superfamily. In terms of tissue distribution, expressed by the venom duct.

It localises to the secreted. This Conus pennaceus (Feathered cone) protein is Conotoxin PnMEKL-032.